The chain runs to 99 residues: Protein S100-Z (99 aa).

EF-hand domains follow at residues 13-48 (ITVF…FLMS) and 50-85 (KDPM…LTVA). 10 residues coordinate Ca(2+): S20, E23, D25, K28, E33, D63, N65, D67, E69, and E74.

Belongs to the S-100 family. In terms of assembly, homodimer. Homodimers may assemble into larger stable oligomers. As to expression, in larva at 5 days post-fertilization, shows very restricted expression only in a few large cells of the olfactory placode. More widely expressed in the adult. Expressed at higher levels in gut than in spleen, head kidney and gill.

This Danio rerio (Zebrafish) protein is Protein S100-Z.